A 300-amino-acid polypeptide reads, in one-letter code: Quinolinate synthase (300 aa).

2 residues coordinate iminosuccinate: His21 and Ser38. Residue Cys83 participates in [4Fe-4S] cluster binding. Iminosuccinate-binding positions include 109–111 (YVN) and Ser126. Cys170 serves as a coordination point for [4Fe-4S] cluster. Residues 196-198 (HPE) and Thr213 contribute to the iminosuccinate site. Cys256 provides a ligand contact to [4Fe-4S] cluster.

It belongs to the quinolinate synthase family. Type 2 subfamily. In terms of assembly, monomer. Homodimer. The cofactor is [4Fe-4S] cluster.

The protein localises to the cytoplasm. The catalysed reaction is iminosuccinate + dihydroxyacetone phosphate = quinolinate + phosphate + 2 H2O + H(+). It participates in cofactor biosynthesis; NAD(+) biosynthesis; quinolinate from iminoaspartate: step 1/1. Its function is as follows. Catalyzes the condensation of iminoaspartate with dihydroxyacetone phosphate to form quinolinate. In Pyrococcus horikoshii (strain ATCC 700860 / DSM 12428 / JCM 9974 / NBRC 100139 / OT-3), this protein is Quinolinate synthase.